Reading from the N-terminus, the 173-residue chain is Alpha-crystallin A chain (173 aa).

N-acetylmethionine is present on Met1. The segment at 1 to 63 (MDIAIQHPWF…RTVLDSGVSE (63 aa)) is required for complex formation with BFSP1 and BFSP2. A Deamidated glutamine; partial modification is found at Gln6. Ser45 bears the Phosphoserine mark. A Deamidated glutamine; partial modification is found at Gln50. Residues 52–162 (LFRTVLDSGV…GHSERAIPVS (111 aa)) enclose the sHSP domain. An N6-acetyllysine modification is found at Lys70. His79 is a binding site for Zn(2+). A Deamidated glutamine; partial modification is found at Gln90. Lys99 is modified (N6-acetyllysine). Residue His100 participates in Zn(2+) binding. Asn101 is modified (deamidated asparagine; partial). Zn(2+) contacts are provided by Glu102 and His107. Ser122 is modified (phosphoserine). Residue Asn123 is modified to Deamidated asparagine; partial. Residues 144–173 (PKVPSGVDAGHSERAIPVSREEKPSSAPTS) form a disordered region. Residues 153–167 (GHSERAIPVSREEKP) are compositionally biased toward basic and acidic residues. A Zn(2+)-binding site is contributed by His154. Ser162 carries an O-linked (GlcNAc) serine glycan.

Belongs to the small heat shock protein (HSP20) family. In terms of assembly, heteromer composed of three CRYAA and one CRYAB subunits. Inter-subunit bridging via zinc ions enhances stability, which is crucial as there is no protein turn over in the lens. Can also form homodimers and homotetramers (dimers of dimers) which serve as the building blocks of homooligomers. Within homooligomers, the zinc-binding motif is created from residues of 3 different molecules. His-100 and Glu-102 from one molecule are ligands of the zinc ion, and His-107 and His-154 residues from additional molecules complete the site with tetrahedral coordination geometry. Part of a complex required for lens intermediate filament formation composed of BFSP1, BFSP2 and CRYAA. Post-translationally, acetylation at Lys-70 may increase chaperone activity. In terms of processing, undergoes age-dependent proteolytical cleavage at the C-terminus.

The protein localises to the cytoplasm. Its subcellular location is the nucleus. In terms of biological role, contributes to the transparency and refractive index of the lens. Acts as a chaperone, preventing aggregation of various proteins under a wide range of stress conditions. Required for the correct formation of lens intermediate filaments as part of a complex composed of BFSP1, BFSP2 and CRYAA. The polypeptide is Alpha-crystallin A chain (CRYAA) (Sus scrofa (Pig)).